A 74-amino-acid polypeptide reads, in one-letter code: U19-theraphotoxin-Cg1a (74 aa).

An N-terminal signal peptide occupies residues 1–7 (IMFVWAS). Residues 8-36 (AAEVEERGSDQRDSPASLKSMETIFQSEQ) constitute a propeptide that is removed on maturation. Cystine bridges form between cysteine 39/cysteine 53, cysteine 46/cysteine 58, and cysteine 52/cysteine 66.

This sequence belongs to the neurotoxin 10 (Hwtx-1) family. 38 (Jztx-33) subfamily. As to expression, expressed by the venom gland.

The protein localises to the secreted. In terms of biological role, probable ion channel inhibitor. In Chilobrachys guangxiensis (Chinese earth tiger tarantula), this protein is U19-theraphotoxin-Cg1a.